Reading from the N-terminus, the 186-residue chain is UPF0301 protein Nmul_A2478 (186 aa).

The protein belongs to the UPF0301 (AlgH) family.

This is UPF0301 protein Nmul_A2478 from Nitrosospira multiformis (strain ATCC 25196 / NCIMB 11849 / C 71).